Here is a 293-residue protein sequence, read N- to C-terminus: Exosome complex component RRP4 (293 aa).

An S1 motif domain is found at 79–159; it reads EVGDIVVGRI…SDGAVSLHTR (81 aa). Ser-124 bears the Phosphoserine mark.

The protein belongs to the RRP4 family. In terms of assembly, component of the RNA exosome core complex (Exo-9), composed of EXOSC1, EXOSC2, EXOSC3, EXOSC4, EXOSC5, EXOSC6, EXOSC7, EXOSC8 and EXOSC9; within the complex interacts with EXOSC4 and EXOSC7. The catalytically inactive RNA exosome core complex (Exo-9) associates with the catalytic subunit EXOSC10/RRP6. Exo-9 may associate with DIS3 to form the nucleolar exosome complex, or DIS3L to form the cytoplasmic exosome complex. Exo-9 is formed by a hexameric base ring consisting of the heterodimers EXOSC4-EXOSC9, EXOSC5-EXOSC8 and EXOSC6-EXOSC7, and a cap ring consisting of EXOSC1, EXOSC2 and EXOSC3. The RNA exosome complex associates with cofactors C1D/RRP47, MPHOSPH6/MPP6 and MTREX/MTR4. Interacts with GTPBP1. Interacts with ZFP36L1 (via N-terminus).

It is found in the cytoplasm. Its subcellular location is the nucleus. The protein localises to the nucleolus. Functionally, non-catalytic component of the RNA exosome complex which has 3'-&gt;5' exoribonuclease activity and participates in a multitude of cellular RNA processing and degradation events. In the nucleus, the RNA exosome complex is involved in proper maturation of stable RNA species such as rRNA, snRNA and snoRNA, in the elimination of RNA processing by-products and non-coding 'pervasive' transcripts, such as antisense RNA species and promoter-upstream transcripts (PROMPTs), and of mRNAs with processing defects, thereby limiting or excluding their export to the cytoplasm. The RNA exosome may be involved in Ig class switch recombination (CSR) and/or Ig variable region somatic hypermutation (SHM) by targeting AICDA deamination activity to transcribed dsDNA substrates. In the cytoplasm, the RNA exosome complex is involved in general mRNA turnover and specifically degrades inherently unstable mRNAs containing AU-rich elements (AREs) within their 3' untranslated regions, and in RNA surveillance pathways, preventing translation of aberrant mRNAs. It seems to be involved in degradation of histone mRNA. The catalytic inactive RNA exosome core complex of 9 subunits (Exo-9) is proposed to play a pivotal role in the binding and presentation of RNA for ribonucleolysis, and to serve as a scaffold for the association with catalytic subunits and accessory proteins or complexes. EXOSC2 as peripheral part of the Exo-9 complex stabilizes the hexameric ring of RNase PH-domain subunits through contacts with EXOSC4 and EXOSC7. In Homo sapiens (Human), this protein is Exosome complex component RRP4.